We begin with the raw amino-acid sequence, 173 residues long: Myeloid-derived growth factor (173 aa).

The signal sequence occupies residues 1-31 (MAAPSGGWNGVGASLWAALLLGAVALRPAEA).

It belongs to the MYDGF family. Expressed in eosinophils (at protein level). Expressed in bone marrow cells. Expressed in synovial tissue. Found in synovial fluid of patients with arthropaties.

The protein resides in the secreted. It is found in the endoplasmic reticulum-Golgi intermediate compartment. It localises to the endoplasmic reticulum. Its subcellular location is the golgi apparatus. Bone marrow-derived monocyte and paracrine-acting protein that promotes cardiac myocyte survival and adaptive angiogenesis for cardiac protection and/or repair after myocardial infarction (MI). Stimulates endothelial cell proliferation through a MAPK1/3-, STAT3- and CCND1-mediated signaling pathway. Inhibits cardiac myocyte apoptosis in a PI3K/AKT-dependent signaling pathway. Involved in endothelial cell proliferation and angiogenesis. The sequence is that of Myeloid-derived growth factor from Homo sapiens (Human).